A 199-amino-acid chain; its full sequence is Urease accessory protein UreG (199 aa).

Residue 8 to 15 (GPVGSGKT) coordinates GTP.

This sequence belongs to the SIMIBI class G3E GTPase family. UreG subfamily. Homodimer. UreH, UreF and UreG form a complex that acts as a GTP-hydrolysis-dependent molecular chaperone, activating the urease apoprotein by helping to assemble the nickel containing metallocenter of UreC. The UreE protein probably delivers the nickel.

It is found in the cytoplasm. Functionally, facilitates the functional incorporation of the urease nickel metallocenter. This process requires GTP hydrolysis, probably effectuated by UreG. The sequence is that of Urease accessory protein UreG from Helicobacter pylori (strain P12).